The following is a 521-amino-acid chain: GMP synthase [glutamine-hydrolyzing] (521 aa).

One can recognise a Glutamine amidotransferase type-1 domain in the interval 8–203 (KILILDFGAQ…VVDVCGCQTL (196 aa)). Cys-85 functions as the Nucleophile in the catalytic mechanism. Catalysis depends on residues His-177 and Glu-179. One can recognise a GMPS ATP-PPase domain in the interval 204-396 (WTAANIIEDQ…LGLPRTMVYR (193 aa)). 231 to 237 (SGGVDSS) lines the ATP pocket.

Homodimer.

It catalyses the reaction XMP + L-glutamine + ATP + H2O = GMP + L-glutamate + AMP + diphosphate + 2 H(+). The protein operates within purine metabolism; GMP biosynthesis; GMP from XMP (L-Gln route): step 1/1. Its function is as follows. Catalyzes the synthesis of GMP from XMP. In Xanthomonas axonopodis pv. citri (strain 306), this protein is GMP synthase [glutamine-hydrolyzing].